We begin with the raw amino-acid sequence, 387 residues long: Cell surface GPI-anchored protein ARB_01627 (387 aa).

Positions 1–19 (MAITKYLVSALAVAGLAFA) are cleaved as a signal peptide. Residues Asn-73, Asn-175, Asn-201, Asn-206, Asn-231, Asn-236, Asn-253, and Asn-270 are each glycosylated (N-linked (GlcNAc...) asparagine). The span at 338–361 (TCRERQEKPKTGDDHSGGDEEGHK) shows a compositional bias: basic and acidic residues. Residues 338–362 (TCRERQEKPKTGDDHSGGDEEGHKG) are disordered. Ala-364 carries GPI-anchor amidated alanine lipidation. Positions 365–387 (AAFAKAPAAALLIAFVGALQFFL) are cleaved as a propeptide — removed in mature form.

Belongs to the SPS2 family. In terms of processing, the GPI-anchor is attached to the protein in the endoplasmic reticulum and serves to target the protein to the cell surface. There, the glucosamine-inositol phospholipid moiety is cleaved off and the GPI-modified mannoprotein is covalently attached via its lipidless GPI glycan remnant to the 1,6-beta-glucan of the outer cell wall layer.

The protein localises to the cell membrane. The protein resides in the secreted. Its subcellular location is the cell wall. In terms of biological role, required for proper cell wall integrity and for the correct assembly of the mannoprotein outer layer of the cell wall. The chain is Cell surface GPI-anchored protein ARB_01627 from Arthroderma benhamiae (strain ATCC MYA-4681 / CBS 112371) (Trichophyton mentagrophytes).